The chain runs to 82 residues: Small ribosomal subunit protein bS16 (82 aa).

Belongs to the bacterial ribosomal protein bS16 family.

This Aeromonas salmonicida (strain A449) protein is Small ribosomal subunit protein bS16.